The chain runs to 94 residues: Translation initiation factor IF-1 (94 aa).

The region spanning Met-1–Lys-72 is the S1-like domain. The tract at residues His-71–Arg-94 is disordered. Low complexity predominate over residues Pro-82–Arg-94.

It belongs to the IF-1 family. Component of the 30S ribosomal translation pre-initiation complex which assembles on the 30S ribosome in the order IF-2 and IF-3, IF-1 and N-formylmethionyl-tRNA(fMet); mRNA recruitment can occur at any time during PIC assembly.

The protein resides in the cytoplasm. One of the essential components for the initiation of protein synthesis. Stabilizes the binding of IF-2 and IF-3 on the 30S subunit to which N-formylmethionyl-tRNA(fMet) subsequently binds. Helps modulate mRNA selection, yielding the 30S pre-initiation complex (PIC). Upon addition of the 50S ribosomal subunit IF-1, IF-2 and IF-3 are released leaving the mature 70S translation initiation complex. The protein is Translation initiation factor IF-1 of Rhodopseudomonas palustris (strain BisB5).